The following is a 117-amino-acid chain: Ribosomal silencing factor RsfS (117 aa).

Belongs to the Iojap/RsfS family. As to quaternary structure, interacts with ribosomal protein uL14 (rplN).

The protein resides in the cytoplasm. Functions as a ribosomal silencing factor. Interacts with ribosomal protein uL14 (rplN), blocking formation of intersubunit bridge B8. Prevents association of the 30S and 50S ribosomal subunits and the formation of functional ribosomes, thus repressing translation. This is Ribosomal silencing factor RsfS from Halalkalibacterium halodurans (strain ATCC BAA-125 / DSM 18197 / FERM 7344 / JCM 9153 / C-125) (Bacillus halodurans).